A 226-amino-acid polypeptide reads, in one-letter code: MYSIKCDDNKAMPRERLMRLGAESLSNQELLAILLRTGNKEKHVLELSSYLLSHLDSLADFKKMSLQELQHLAGIGKVKAIEIKAMIELVSRILATDKTLTDSVLTSVQVAEKMMAALGDKKQEHLVVLYLDNQNRIFEEKTIFIGTVRRSLAEPREILYYACKNMATSLIVIHNHPSGNIEPSSNDYCFTEKIKRSCEDLGIICLDHIIVSYKDYYSFREKSTLF.

The MPN domain maps to 103–225 (SVLTSVQVAE…YYSFREKSTL (123 aa)). Zn(2+) contacts are provided by His-174, His-176, and Asp-187. A JAMM motif motif is present at residues 174 to 187 (HNHPSGNIEPSSND).

Belongs to the UPF0758 family.

This Streptococcus pyogenes serotype M28 (strain MGAS6180) protein is UPF0758 protein M28_Spy0816.